The primary structure comprises 280 residues: UPF0328 protein ECU06_0020/ECU06_1700 (280 aa).

Belongs to the UPF0328 family.

The protein is UPF0328 protein ECU06_0020/ECU06_1700 of Encephalitozoon cuniculi (strain GB-M1) (Microsporidian parasite).